The sequence spans 734 residues: Sulfate transporter (734 aa).

Residues 1 to 11 (MSLKNGEQNDL) show a composition bias toward polar residues. A disordered region spans residues 1–38 (MSLKNGEQNDLSPKDSVKGNDQYRSPSGIHVEHEEESR). Phosphoserine occurs at positions 12 and 16. 2 consecutive transmembrane segments (helical) span residues 113-133 (MMSG…YSLL) and 138-158 (PIYG…LGTS). N-linked (GlcNAc...) asparagine glycosylation is found at N194 and N204. The next 8 membrane-spanning stretches (helical) occupy residues 222 to 242 (FVAG…VSVY), 247 to 267 (LLGG…VKYL), 269 to 289 (GLSL…IHIF), 292 to 312 (IHKT…VLLP), 379 to 399 (VDAI…SEMF), 415 to 435 (AIGF…SAAL), 453 to 473 (VMTA…FFSL), and 519 to 539 (LIST…CVIL). An STAS domain is found at 563–714 (AYKNLQAKSG…YSVYEAMTFA (152 aa)).

It belongs to the SLC26A/SulP transporter (TC 2.A.53) family. Post-translationally, N-glycosylated.

It is found in the cell membrane. The protein resides in the apical cell membrane. The enzyme catalyses oxalate(in) + sulfate(out) = oxalate(out) + sulfate(in). It carries out the reaction sulfate(out) + 2 chloride(in) = sulfate(in) + 2 chloride(out). The catalysed reaction is oxalate(out) + 2 chloride(in) = oxalate(in) + 2 chloride(out). It catalyses the reaction bromide(in) + chloride(out) = bromide(out) + chloride(in). The enzyme catalyses nitrate(in) + chloride(out) = nitrate(out) + chloride(in). It carries out the reaction iodide(in) + chloride(out) = iodide(out) + chloride(in). In terms of biological role, sulfate transporter which mediates sulfate uptake into chondrocytes in order to maintain adequate sulfation of proteoglycans which is needed for cartilage development. Mediates electroneutral anion exchange of sulfate ions for oxalate ions, sulfate and oxalate ions for chloride and/or hydroxyl ions and chloride ions for bromide, iodide and nitrate ions. The coupling of sulfate transport to both hydroxyl and chloride ions likely serves to ensure transport at both acidic pH when most sulfate uptake is mediated by sulfate-hydroxide exchange and alkaline pH when most sulfate uptake is mediated by sulfate-chloride exchange. Essential for chondrocyte proliferation, differentiation and cell size expansion. This is Sulfate transporter (SLC26A2) from Ovis aries (Sheep).